The primary structure comprises 321 residues: Cilia- and flagella-associated protein 161 (321 aa).

Residues 275–321 (LSTMLDLPKPPAEDTRALEQEREQVSDPGARSTPDARGCVPQCTLPM) form a disordered region. Residues 285–299 (PAEDTRALEQEREQV) show a composition bias toward basic and acidic residues.

As to quaternary structure, microtubule inner protein component of sperm flagellar doublet microtubules. Expressed in trachea multiciliated cells.

It is found in the cytoplasm. The protein resides in the cytoskeleton. It localises to the cilium axoneme. Its subcellular location is the flagellum axoneme. Microtubule inner protein (MIP) part of the dynein-decorated doublet microtubules (DMTs) in cilia axoneme, which is required for motile cilia beating. This chain is Cilia- and flagella-associated protein 161, found in Bos taurus (Bovine).